Consider the following 134-residue polypeptide: Small ribosomal subunit protein uS8c (134 aa).

It belongs to the universal ribosomal protein uS8 family. In terms of assembly, part of the 30S ribosomal subunit.

It is found in the plastid. The protein resides in the chloroplast. One of the primary rRNA binding proteins, it binds directly to 16S rRNA central domain where it helps coordinate assembly of the platform of the 30S subunit. In Lotus japonicus (Lotus corniculatus var. japonicus), this protein is Small ribosomal subunit protein uS8c (rps8).